A 291-amino-acid polypeptide reads, in one-letter code: Early E4 34 kDa protein (291 aa).

The protein belongs to the adenoviridae E4 30 to 34 kDa protein family. As to quaternary structure, interacts with E1B-55k.

It localises to the host nucleus. Its subcellular location is the host cytoplasm. Its function is as follows. Plays a major role to prevent cellular inhibition of viral genome replication by nuclear bodies. Assembles an SCF-like E3 ubiquitin ligase complex based on the cellular proteins ELOB, ELOC, CUL5 and RBX1, in cooperation with viral E1B-55K. This viral RING-type ligase ubiquitinates cellular substrates prior to proteasomal degradation: p53/TP53, LIG4, MRE11-RAD50-NBS1 (MRN) complex, ITGA3, DAXX and BLM. The sequence is that of Early E4 34 kDa protein from Homo sapiens (Human).